We begin with the raw amino-acid sequence, 162 residues long: Phosphopantetheine adenylyltransferase (162 aa).

Ser11 lines the substrate pocket. ATP contacts are provided by residues 11–12 and His19; that span reads SF. Substrate is bound by residues Lys43, Val76, and Arg90. Residues 91 to 93, Glu101, and 126 to 132 contribute to the ATP site; these read GLR and HLYISSS.

Belongs to the bacterial CoaD family. Homohexamer. Mg(2+) serves as cofactor.

Its subcellular location is the cytoplasm. The enzyme catalyses (R)-4'-phosphopantetheine + ATP + H(+) = 3'-dephospho-CoA + diphosphate. It participates in cofactor biosynthesis; coenzyme A biosynthesis; CoA from (R)-pantothenate: step 4/5. Its function is as follows. Reversibly transfers an adenylyl group from ATP to 4'-phosphopantetheine, yielding dephospho-CoA (dPCoA) and pyrophosphate. The chain is Phosphopantetheine adenylyltransferase from Streptococcus pneumoniae (strain Taiwan19F-14).